The following is a 302-amino-acid chain: MLAEALPWLQHFRDKIVVVKYGGNAMVDDSLKAAFAADMVFLRTVGAKPVVVHGGGPQISDMLRRVGLEGEFKGGFRVTTPEVMEIVRMVLFGQVGRDLVGLINSHGPYAVGTSGEDAGLFTAEKRLVDIDGTPTDIGLVGNIVNVDATSLMDLIDAGRIPVVSTIAPGADGQVYNINADTAAGALASAIGAERLLVLTNVEGLYTDWPNKSSLVSKIVASELDAILPGLDAGMIPKMESCLNAVRGGVNAAHVIDGRIAHSVLLELLTMGGIGTMVLPDNYAREDYPEGTVFRKNYQDGHA.

Residues Gly55–Gly56, Arg77, and Asn176 contribute to the substrate site.

This sequence belongs to the acetylglutamate kinase family. ArgB subfamily.

The protein localises to the cytoplasm. It carries out the reaction N-acetyl-L-glutamate + ATP = N-acetyl-L-glutamyl 5-phosphate + ADP. It functions in the pathway amino-acid biosynthesis; L-arginine biosynthesis; N(2)-acetyl-L-ornithine from L-glutamate: step 2/4. Functionally, catalyzes the ATP-dependent phosphorylation of N-acetyl-L-glutamate. This is Acetylglutamate kinase from Corynebacterium efficiens (strain DSM 44549 / YS-314 / AJ 12310 / JCM 11189 / NBRC 100395).